A 232-amino-acid chain; its full sequence is N-acetyltransferase 8B (232 aa).

The Cytoplasmic portion of the chain corresponds to 1 to 62; sequence MPRFEAQKSS…FLLLLGVPLA (62 aa). The chain crosses the membrane as a helical; Signal-anchor for type II membrane protein span at residues 63–83; sequence LVLVSGSWILAVICIFFLLLL. An N-acetyltransferase domain is found at 79–224; it reads FLLLLLRLLA…WRLVDICFIQ (146 aa). At 84-232 the chain is on the lumenal side; sequence LRLLARQPWK…IQLNYSFPSA (149 aa). Lys109 is subject to N6-acetyllysine.

Belongs to the NAT8 family. Acetylation on Lys-109 modulates enzymatic activity. As to expression, expressed in brain (at protein level).

It localises to the endoplasmic reticulum-Golgi intermediate compartment membrane. It is found in the endoplasmic reticulum membrane. It catalyses the reaction L-lysyl-[protein] + acetyl-CoA = N(6)-acetyl-L-lysyl-[protein] + CoA + H(+). Endoplasmic reticulum (ER)-membrane-bound lysine N-acetyltransferase catalyzing the N6-acetylation of lysine residues in the lumen of the ER in various proteins, including PROM1 and BACE1, using acetyl-CoA as acetyl donor. Thereby, may regulate apoptosis through the acetylation and the regulation of the expression of PROM1. Acetylates and stabilizes BACE1 immature protein, leading to increased steady-state levels in neurons. By acting on BACE1 expression, may regulate amyloid beta-peptide formation. N(6)-lysine acetylation in ER maintains protein homeostasis and regulates reticulophagy. The polypeptide is N-acetyltransferase 8B (Mus musculus (Mouse)).